The chain runs to 631 residues: Glutamyl-tRNA(Gln) amidotransferase subunit E (631 aa).

The protein belongs to the GatB/GatE family. GatE subfamily. Heterodimer of GatD and GatE.

The enzyme catalyses L-glutamyl-tRNA(Gln) + L-glutamine + ATP + H2O = L-glutaminyl-tRNA(Gln) + L-glutamate + ADP + phosphate + H(+). Functionally, allows the formation of correctly charged Gln-tRNA(Gln) through the transamidation of misacylated Glu-tRNA(Gln) in organisms which lack glutaminyl-tRNA synthetase. The reaction takes place in the presence of glutamine and ATP through an activated gamma-phospho-Glu-tRNA(Gln). The GatDE system is specific for glutamate and does not act on aspartate. The polypeptide is Glutamyl-tRNA(Gln) amidotransferase subunit E (Methanococcus maripaludis (strain DSM 14266 / JCM 13030 / NBRC 101832 / S2 / LL)).